We begin with the raw amino-acid sequence, 640 residues long: Probable potassium transport system protein Kup 1 (640 aa).

12 consecutive transmembrane segments (helical) span residues 24–44, 67–87, 116–136, 154–174, 186–206, 222–242, 264–284, 296–316, 354–374, 382–402, 411–431, and 436–456; these read LGAL…TSPL, IASL…VLFV, VGPL…DGMI, PFFA…LFTI, FGPV…TEVV, TFLF…VLAV, WFAL…ALIL, MLVP…ATVI, IYIP…VVGF, AAYG…ALVV, LWLC…FLGA, and VTQG…LMAT.

It belongs to the HAK/KUP transporter (TC 2.A.72) family.

The protein resides in the cell inner membrane. The enzyme catalyses K(+)(in) + H(+)(in) = K(+)(out) + H(+)(out). Its function is as follows. Transport of potassium into the cell. Likely operates as a K(+):H(+) symporter. In Paramagnetospirillum magneticum (strain ATCC 700264 / AMB-1) (Magnetospirillum magneticum), this protein is Probable potassium transport system protein Kup 1.